The sequence spans 934 residues: Serine/threonine-protein kinase PknD (934 aa).

Positions 4-296 (YELIRLIGRG…ELRKALQPHL (293 aa)) constitute a Protein kinase domain. Residues 10–18 (IGRGGMGEV) and Lys-33 contribute to the ATP site. Asp-138 functions as the Proton acceptor in the catalytic mechanism.

It belongs to the protein kinase superfamily. Ser/Thr protein kinase family. Post-translationally, autophosphorylated on serine and threonine residues.

The catalysed reaction is L-seryl-[protein] + ATP = O-phospho-L-seryl-[protein] + ADP + H(+). It carries out the reaction L-threonyl-[protein] + ATP = O-phospho-L-threonyl-[protein] + ADP + H(+). Functionally, together with the serine/threonine kinase Pkn1, may play a role in the specific interactions with host proteins during intracellular growth. The protein is Serine/threonine-protein kinase PknD of Chlamydia muridarum (strain MoPn / Nigg).